The sequence spans 119 residues: NADH-quinone oxidoreductase subunit A (119 aa).

Transmembrane regions (helical) follow at residues 9–29 (VILF…LGFL), 63–83 (LVAI…PWAV), and 88–108 (IGAT…VGFV).

The protein belongs to the complex I subunit 3 family. In terms of assembly, NDH-1 is composed of 14 different subunits. Subunits NuoA, H, J, K, L, M, N constitute the membrane sector of the complex.

It is found in the cell inner membrane. It carries out the reaction a quinone + NADH + 5 H(+)(in) = a quinol + NAD(+) + 4 H(+)(out). In terms of biological role, NDH-1 shuttles electrons from NADH, via FMN and iron-sulfur (Fe-S) centers, to quinones in the respiratory chain. The immediate electron acceptor for the enzyme in this species is believed to be ubiquinone. Couples the redox reaction to proton translocation (for every two electrons transferred, four hydrogen ions are translocated across the cytoplasmic membrane), and thus conserves the redox energy in a proton gradient. This Leptothrix cholodnii (strain ATCC 51168 / LMG 8142 / SP-6) (Leptothrix discophora (strain SP-6)) protein is NADH-quinone oxidoreductase subunit A.